The primary structure comprises 757 residues: Transcription regulator rua1 (757 aa).

Disordered regions lie at residues 122-169 (SSGS…LPVS), 181-218 (NHQV…SNQD), 237-295 (RNTG…NGYT), 372-393 (SADC…PYPL), and 422-582 (MELQ…IGNA). Residues 125 to 165 (SATKSEPSTCSSSTDFSMSSTADASTAPQHSSSGDSSMSSG) show a composition bias toward low complexity. Composition is skewed to polar residues over residues 181 to 190 (NHQVTTQDAS) and 200 to 218 (QPPS…SNQD). Over residues 240-249 (GHRQHNRHQK) the composition is skewed to basic residues. Residues 253 to 277 (LPQGQSCTNSGSSSRQVTRPNSPNH) show a composition bias toward polar residues. The segment covering 379-393 (PRPPSNSPEPHPYPL) has biased composition (pro residues). The span at 428 to 437 (PARSNSTFGR) shows a compositional bias: polar residues. Residues 439-453 (SQRHHQPPPSHRQRS) are compositionally biased toward basic residues. Composition is skewed to low complexity over residues 454-465 (RTSASSISNTNA), 494-510 (ASQS…ATDA), and 543-582 (TSSS…IGNA). The C2H2-type 1 degenerate zinc finger occupies 661–692 (REGWCSLCPQGEWYSMKRSQYLYHMQFDHGIS). The C2H2-type 2; degenerate zinc-finger motif lies at 717-750 (GLCHHCNKWIPICFGPQRKRDFKAWFKHARKCHR).

It is found in the nucleus. Transcription factor; part of the gene cluster that mediates the biosynthesis of the glycolipid biosurfactant ustilagic acid (UA). UA is a secreted cellobiose glycolipid that is toxic for many microorganisms and confers biocontrol activity to U.maydis. Recognizes and binds to the specific 5'-T/G-G/T-C-G-C-A-T-A/T-C/T-C/T-G/A-3' upstream activating sequence found in all promoters of the UA biosynthesis genes. The polypeptide is Transcription regulator rua1 (Mycosarcoma maydis (Corn smut fungus)).